The sequence spans 962 residues: MEQMFVHIWVSLVVLMSVWSAQSDKKQDVPVIDVLGLEDVKQTVAAVEKLSLALKTLSDVYVMSTFRLPPKLGGVLLGLYNKQDNKKYLEVAIMSKINKVLVRYVREDGKLHTVNMQSPNVADGRPQSLILRVGGLRREYLSLELYVNCRLADSAQRLPPLVDLPRDAELVEIRNGHKAYARMQGSMDTLKLALGGTVAQAGALTDCPFQGDASSYNIVNGEVNSILGDHTKALIGQLIIFNQILGELREDIREQVKEMSLVRNAILECQMCGFHEPRSRCQPNPCFKGVSCMETFEYPGYRCGPCPDGMTGNGTHCQDIDECSEAQPCYTPGACVNTARGFTCESCPPGMWGPPLSGVGVEYAKSHRQECSDIDECVDLANACTPNSVCINIIGSFRCGQCKTGYVGNQTAGCFPRKSCSSLSFNPCDANAHCVMQRNGDVSCACNVGWAGNGHTCGKDTDIDGYPDRSLPCMDNHKHCRQDNCVYTPNSGQEDADNDGIGDQCDEDADGDGIKNVEDNCRLVSNKDQQNSDTDSFGDACDNCPTVPNIDQKDTDSNGEGDACDDDIDGDGIQNVLDNCPKVPNPMQTDRDRDGVGDACDSCPEISNPMQTDVDNDLVGDVCDTNQDTDGDGHQDTRDNCPDIPNSSQLDSDNDGIGDDCDEDDDNDGIPDNHAINGIGPDNCRLISNPNQKDSDSNGVGDVCENDFDNDSVMDLVDVCPESAEVTLTDFRAYQTVILDPEGDAQIDPNWVVLNQGMEIVQTMNSDPGLAVGYTAFNGVDFEGTFHVNTVTDDDCAGSIFGYQDSSSFYVVMWKQTEQTYWQSIPFRAMAEPGLQLKAVKSRTGPGEFLRNALWHAGDTDGEVKLLWKDPRNVGWLDKTSYRWQLSHRPQVGYIRVKLYEGSEMVADSDVVIDTSMRGGRLGVFCFSQENIIWSNLRYRCNDTVPEDFSSHRKQVLMHIKV.

A signal peptide spans 1–23 (MEQMFVHIWVSLVVLMSVWSAQS). The 173-residue stretch at 24 to 196 (DKKQDVPVID…MDTLKLALGG (173 aa)) folds into the Laminin G-like domain. The EGF-like 1 domain occupies 277-318 (PRSRCQPNPCFKGVSCMETFEYPGYRCGPCPDGMTGNGTHCQ). Disulfide bonds link Cys281-Cys292, Cys286-Cys303, Cys306-Cys317, Cys323-Cys335, Cys329-Cys344, Cys347-Cys371, Cys377-Cys390, Cys384-Cys399, Cys402-Cys414, Cys420-Cys434, Cys428-Cys444, Cys446-Cys457, Cys473-Cys480, Cys485-Cys505, Cys521-Cys541, Cys544-Cys564, Cys580-Cys600, Cys603-Cys623, Cys641-Cys661, and Cys684-Cys704. Asn313 carries an N-linked (GlcNAc...) asparagine glycan. The 40-residue stretch at 319–358 (DIDECSEAQPCYTPGACVNTARGFTCESCPPGMWGPPLSG) folds into the EGF-like 2; calcium-binding domain. Positions 373 to 412 (DIDECVDLANACTPNSVCINIIGSFRCGQCKTGYVGNQTA) constitute an EGF-like 3; calcium-binding domain. N-linked (GlcNAc...) asparagine glycosylation occurs at Asn409. The EGF-like 4 domain maps to 416 to 458 (PRKSCSSLSFNPCDANAHCVMQRNGDVSCACNVGWAGNGHTCG). TSP type-3 repeat units follow at residues 459-493 (KDTD…NSGQ), 494-529 (EDAD…NKDQ), 530-552 (QNSD…NIDQ), 553-588 (KDTD…NPMQ), 589-611 (TDRD…NPMQ), 612-649 (TDVD…NSSQ), 650-692 (LDSD…NPNQ), and 693-728 (KDSD…EVTL). Residues 548-704 (PNIDQKDTDS…SDSNGVGDVC (157 aa)) form a disordered region. Acidic residues predominate over residues 557–570 (SNGEGDACDDDIDG). Over residues 631–641 (GDGHQDTRDNC) the composition is skewed to basic and acidic residues. An N-linked (GlcNAc...) asparagine glycan is attached at Asn646. Acidic residues predominate over residues 652–669 (SDNDGIGDDCDEDDDNDG). An N-linked (GlcNAc...) asparagine glycan is attached at Asn710. Residues Cys720 and Cys941 are joined by a disulfide bond. The TSP C-terminal domain maps to 732–946 (RAYQTVILDP…LRYRCNDTVP (215 aa)). An N-linked (GlcNAc...) asparagine glycan is attached at Asn942.

It belongs to the thrombospondin family. As to quaternary structure, oligomer; disulfide-linked.

In terms of biological role, adhesive glycoprotein that mediates cell-to-cell and cell-to-matrix interactions. Can bind to fibrinogen, fibronectin, laminin and type V collagen. The chain is Thrombospondin-3a (thbs3a) from Danio rerio (Zebrafish).